Here is a 223-residue protein sequence, read N- to C-terminus: Endonuclease NucS (223 aa).

The protein belongs to the NucS endonuclease family.

It localises to the cytoplasm. Its function is as follows. Cleaves both 3' and 5' ssDNA extremities of branched DNA structures. The sequence is that of Endonuclease NucS from Mycolicibacterium gilvum (strain PYR-GCK) (Mycobacterium gilvum (strain PYR-GCK)).